Consider the following 165-residue polypeptide: Ribosome maturation factor RimM (165 aa).

The PRC barrel domain maps to 94–165 (EDEFYIADLN…YVILNYQTKV (72 aa)).

This sequence belongs to the RimM family. As to quaternary structure, binds ribosomal protein uS19.

Its subcellular location is the cytoplasm. In terms of biological role, an accessory protein needed during the final step in the assembly of 30S ribosomal subunit, possibly for assembly of the head region. Essential for efficient processing of 16S rRNA. May be needed both before and after RbfA during the maturation of 16S rRNA. It has affinity for free ribosomal 30S subunits but not for 70S ribosomes. In Rickettsia typhi (strain ATCC VR-144 / Wilmington), this protein is Ribosome maturation factor RimM.